Reading from the N-terminus, the 160-residue chain is SsrA-binding protein (160 aa).

This sequence belongs to the SmpB family.

It is found in the cytoplasm. Required for rescue of stalled ribosomes mediated by trans-translation. Binds to transfer-messenger RNA (tmRNA), required for stable association of tmRNA with ribosomes. tmRNA and SmpB together mimic tRNA shape, replacing the anticodon stem-loop with SmpB. tmRNA is encoded by the ssrA gene; the 2 termini fold to resemble tRNA(Ala) and it encodes a 'tag peptide', a short internal open reading frame. During trans-translation Ala-aminoacylated tmRNA acts like a tRNA, entering the A-site of stalled ribosomes, displacing the stalled mRNA. The ribosome then switches to translate the ORF on the tmRNA; the nascent peptide is terminated with the 'tag peptide' encoded by the tmRNA and targeted for degradation. The ribosome is freed to recommence translation, which seems to be the essential function of trans-translation. This chain is SsrA-binding protein, found in Photorhabdus laumondii subsp. laumondii (strain DSM 15139 / CIP 105565 / TT01) (Photorhabdus luminescens subsp. laumondii).